The following is a 224-amino-acid chain: Pyridoxine/pyridoxamine 5'-phosphate oxidase (224 aa).

Residues 69 to 74 (RHVLLK), 83 to 84 (FT), arginine 89, lysine 90, and glutamine 112 contribute to the FMN site. Position 74 (lysine 74) interacts with substrate. 3 residues coordinate substrate: tyrosine 130, arginine 134, and serine 138. Residues 148–149 (QS) and tryptophan 194 contribute to the FMN site. 200–202 (RMH) is a substrate binding site. Arginine 204 lines the FMN pocket.

The protein belongs to the pyridoxamine 5'-phosphate oxidase family. In terms of assembly, homodimer. The cofactor is FMN.

It catalyses the reaction pyridoxamine 5'-phosphate + O2 + H2O = pyridoxal 5'-phosphate + H2O2 + NH4(+). The enzyme catalyses pyridoxine 5'-phosphate + O2 = pyridoxal 5'-phosphate + H2O2. It participates in cofactor metabolism; pyridoxal 5'-phosphate salvage; pyridoxal 5'-phosphate from pyridoxamine 5'-phosphate: step 1/1. Its pathway is cofactor metabolism; pyridoxal 5'-phosphate salvage; pyridoxal 5'-phosphate from pyridoxine 5'-phosphate: step 1/1. In terms of biological role, catalyzes the oxidation of either pyridoxine 5'-phosphate (PNP) or pyridoxamine 5'-phosphate (PMP) into pyridoxal 5'-phosphate (PLP). The protein is Pyridoxine/pyridoxamine 5'-phosphate oxidase of Acidothermus cellulolyticus (strain ATCC 43068 / DSM 8971 / 11B).